We begin with the raw amino-acid sequence, 273 residues long: Large ribosomal subunit protein uL2 (273 aa).

Disordered stretches follow at residues 28–53 (KPFA…TTRH) and 221–273 (RGTA…RRSK). Over residues 39–48 (KSGGRNNNGR) the composition is skewed to low complexity. At Lys-242 the chain carries N6-acetyllysine.

This sequence belongs to the universal ribosomal protein uL2 family. As to quaternary structure, part of the 50S ribosomal subunit. Forms a bridge to the 30S subunit in the 70S ribosome.

In terms of biological role, one of the primary rRNA binding proteins. Required for association of the 30S and 50S subunits to form the 70S ribosome, for tRNA binding and peptide bond formation. It has been suggested to have peptidyltransferase activity; this is somewhat controversial. Makes several contacts with the 16S rRNA in the 70S ribosome. The protein is Large ribosomal subunit protein uL2 of Escherichia coli (strain SE11).